The following is a 544-amino-acid chain: Chaperonin GroEL (544 aa).

ATP contacts are provided by residues 30-33 (TLGP), lysine 51, 87-91 (DGTTT), glycine 415, and aspartate 495.

Belongs to the chaperonin (HSP60) family. In terms of assembly, forms a cylinder of 14 subunits composed of two heptameric rings stacked back-to-back. Interacts with the co-chaperonin GroES.

It is found in the cytoplasm. It catalyses the reaction ATP + H2O + a folded polypeptide = ADP + phosphate + an unfolded polypeptide.. Together with its co-chaperonin GroES, plays an essential role in assisting protein folding. The GroEL-GroES system forms a nano-cage that allows encapsulation of the non-native substrate proteins and provides a physical environment optimized to promote and accelerate protein folding. This chain is Chaperonin GroEL, found in Methylobacillus flagellatus (strain ATCC 51484 / DSM 6875 / VKM B-1610 / KT).